The chain runs to 257 residues: Phycoerythrobilin:ferredoxin oxidoreductase (257 aa).

This sequence belongs to the HY2 family.

It catalyses the reaction (3Z)-phycoerythrobilin + oxidized 2[4Fe-4S]-[ferredoxin] = 15,16-dihydrobiliverdin + reduced 2[4Fe-4S]-[ferredoxin] + 2 H(+). Its function is as follows. Catalyzes the two-electron reduction of the C2 and C3(1) diene system of 15,16-dihydrobiliverdin. The polypeptide is Phycoerythrobilin:ferredoxin oxidoreductase (Prochlorococcus marinus (strain MIT 9211)).